We begin with the raw amino-acid sequence, 366 residues long: Di-N-acetylchitobiase (366 aa).

A signal peptide spans 1–22; sequence MALCGLPEFTLLLLPLLARLSA. A GH18 domain is found at 23–366; the sequence is GDCPCSEAAL…EMWGALKPRL (344 aa). Residue glutamate 127 is the Proton donor of the active site. Asparagine 131, asparagine 177, asparagine 212, asparagine 246, and asparagine 283 each carry an N-linked (GlcNAc...) asparagine glycan.

This sequence belongs to the glycosyl hydrolase 18 family.

The protein resides in the lysosome. In terms of biological role, involved in the degradation of asparagine-linked glycoproteins. Hydrolyze of N-acetyl-beta-D-glucosamine (1-4)N-acetylglucosamine chitobiose core from the reducing end of the bond, it requires prior cleavage by glycosylasparaginase. The protein is Di-N-acetylchitobiase (Ctbs) of Mus musculus (Mouse).